Reading from the N-terminus, the 260-residue chain is Vesicle-associated membrane protein/synaptobrevin-binding protein (260 aa).

Residues 1–238 (MASHEQALIL…SPAPAAAVRA (238 aa)) lie on the Cytoplasmic side of the membrane. The region spanning 7 to 125 (ALILEPAGEL…MDTKLRCVFE (119 aa)) is the MSP domain. The tract at residues 127 to 177 (PDGSHQAPASDASRATDAGAHFSESALEDPTVASRKTETQSPKRVGAVGSA) is disordered. A coiled-coil region spans residues 172–216 (GAVGSAGEDVKKLQHELKKAQSEITSLKGENSQLKDEGIRLRKVA). The chain crosses the membrane as a helical; Anchor for type IV membrane protein span at residues 239 to 259 (FPPVVYVVAAIILGLIIGKFL).

Belongs to the VAMP-associated protein (VAP) (TC 9.B.17) family. Detected only in the central nervous system and the gill of aplysia.

The protein resides in the membrane. It is found in the synapse. It localises to the synaptosome. Its function is as follows. Required for neurotransmitter release. Interacts with VAMP. The protein is Vesicle-associated membrane protein/synaptobrevin-binding protein of Aplysia californica (California sea hare).